Consider the following 570-residue polypeptide: Protein mom-5 (570 aa).

Residues 1–16 (MHRHILILFLFGCLSA) form the signal peptide. Topologically, residues 17 to 230 (DQRLSSTSIS…FDGRVRRILR (214 aa)) are extracellular. Residues 32 to 148 (STTRKCEHIT…FPVTDLCVGK (117 aa)) enclose the FZ domain. 5 cysteine pairs are disulfide-bonded: Cys37–Cys98, Cys45–Cys91, Cys82–Cys119, Cys108–Cys145, and Cys112–Cys136. The N-linked (GlcNAc...) asparagine glycan is linked to Asn51. N-linked (GlcNAc...) asparagine glycosylation is present at Asn149. A helical transmembrane segment spans residues 231 to 251 (IWTAAWSVACFVCSLFTLVTF). The Cytoplasmic portion of the chain corresponds to 252-264 (LVDLSRFAYPVRP). The helical transmembrane segment at 265-285 (ILYLAFCYLAISTVYMIGVVG) threads the bilayer. Residues 286-319 (EDGFACGTYGSTPTTLVTQGGENVGCSALAVVHY) are Extracellular-facing. A helical membrane pass occupies residues 320–340 (FFFMSSCAWWLVLCLAWFLAA). At 341–348 (NLKWGAES) the chain is on the cytoplasmic side. The chain crosses the membrane as a helical span at residues 349–369 (IAALSPYFHAMCWGVPAVLSV). Over 370–395 (TVLVTNSVDGDVFTGICSVGNLNPSA) the chain is Extracellular. A helical transmembrane segment spans residues 396–416 (LVYFFFTPIVVSLALGAVLLV). Residues 417-449 (CGIWSMIRIRSYIKLQHADVERNISKLEKLMLR) lie on the Cytoplasmic side of the membrane. Residues 450–470 (IGAFAIMYSLPTAMNAAIMWY) traverse the membrane as a helical segment. At 471-515 (QAVNMPAWLEGWLHHRCVRLQDRELFGFTYPVDDCPMDPKVAAPE) the chain is on the extracellular side. A helical membrane pass occupies residues 516–536 (IIVFLLKYVSQLVVGITCAIW). Topologically, residues 537–570 (VVSSKTLSSYHKAYLALSSRSPTVPAHVDQVNMR) are cytoplasmic.

This sequence belongs to the G-protein coupled receptor Fz/Smo family.

The protein localises to the cell membrane. It is found in the early endosome. Functionally, receptor for Wnt proteins. Most frizzled receptors are coupled to the beta-catenin canonical signaling pathway, which leads to the activation of disheveled proteins, inhibition of gsk-3 kinase, nuclear accumulation of beta-catenin and activation of Wnt target genes. A second signaling pathway involving PKC and calcium fluxes has been seen for some family members, but it is not yet clear if it represents a distinct pathway or if it can be integrated in the canonical pathway, as pkc seems to be required for Wnt-mediated inactivation of gsk-3 kinase. Both pathways seem to involve interactions with G-proteins. Required in embryonic development for the correct positioning and orientation of the mitotic spindles and division planes in blastomere cells. During early embryonic cell divisions, directs the asymmetric positioning of transcription factors such as pop-1 and dsh-2 in daughter cells in order to determine cell fate specification. Acts redundantly with other Wnt receptors such as lin-17 to control vulval precursor cell specification and also the polarity of different cell types including distal tip cells, seam cells, AVG interneurons and P-cells and their descendants. Plays a role in the migration of cell types including distal tip cells and the QR neuroblast descendants, QR.p and QR.pa during larval development. Negatively regulates the unc-6/Netrin receptors unc-5 and unc-40 to control distal tip cell polarity and migration. Acts through ced-5/DOCK180 and ced-10/Rac to control both distal tip cell migration and the phagocytic clearance of apoptotic cell corpses. Furthermore, it is also required for the migration and axon guidance of the different neuronal cell types including CAN, ALM, HSN and the two mechanosensory neurons AVM and PVM. Mediates Wnt receptor cfz-2 in directing ALM migration, but may also act redundantly with the Wnt receptors cfz-2 and mig-1 to direct the migration of other neuronal cell types including CAN and HSN. Mediates Wnt ligand egl-20 in the control of the anterior-posterior axon guidance of AVM and PVM neurons. This is Protein mom-5 from Caenorhabditis elegans.